The following is a 465-amino-acid chain: UDP-N-acetylmuramate--L-alanine ligase (465 aa).

Position 115 to 121 (115 to 121 (GAHGKTT)) interacts with ATP.

The protein belongs to the MurCDEF family.

The protein localises to the cytoplasm. The catalysed reaction is UDP-N-acetyl-alpha-D-muramate + L-alanine + ATP = UDP-N-acetyl-alpha-D-muramoyl-L-alanine + ADP + phosphate + H(+). Its pathway is cell wall biogenesis; peptidoglycan biosynthesis. Its function is as follows. Cell wall formation. The sequence is that of UDP-N-acetylmuramate--L-alanine ligase from Coxiella burnetii (strain CbuG_Q212) (Coxiella burnetii (strain Q212)).